The following is a 262-amino-acid chain: Type III pantothenate kinase (262 aa).

9–16 (DAGNSRIK) serves as a coordination point for ATP. Substrate-binding positions include tyrosine 96 and 103–106 (GSDR). Aspartate 105 functions as the Proton acceptor in the catalytic mechanism. ATP is bound at residue threonine 129. Threonine 189 is a substrate binding site.

This sequence belongs to the type III pantothenate kinase family. As to quaternary structure, homodimer. The cofactor is NH4(+). K(+) is required as a cofactor.

It localises to the cytoplasm. The enzyme catalyses (R)-pantothenate + ATP = (R)-4'-phosphopantothenate + ADP + H(+). It participates in cofactor biosynthesis; coenzyme A biosynthesis; CoA from (R)-pantothenate: step 1/5. Catalyzes the phosphorylation of pantothenate (Pan), the first step in CoA biosynthesis. The sequence is that of Type III pantothenate kinase from Burkholderia vietnamiensis (strain G4 / LMG 22486) (Burkholderia cepacia (strain R1808)).